We begin with the raw amino-acid sequence, 308 residues long: N-acetyl-gamma-glutamyl-phosphate reductase (308 aa).

Residue cysteine 116 is part of the active site.

Belongs to the NAGSA dehydrogenase family. Type 2 subfamily.

It is found in the cytoplasm. The catalysed reaction is N-acetyl-L-glutamate 5-semialdehyde + phosphate + NADP(+) = N-acetyl-L-glutamyl 5-phosphate + NADPH + H(+). It functions in the pathway amino-acid biosynthesis; L-arginine biosynthesis; N(2)-acetyl-L-ornithine from L-glutamate: step 3/4. Functionally, catalyzes the NADPH-dependent reduction of N-acetyl-5-glutamyl phosphate to yield N-acetyl-L-glutamate 5-semialdehyde. This is N-acetyl-gamma-glutamyl-phosphate reductase from Mesorhizobium japonicum (strain LMG 29417 / CECT 9101 / MAFF 303099) (Mesorhizobium loti (strain MAFF 303099)).